The primary structure comprises 632 residues: 1-deoxy-D-xylulose-5-phosphate synthase (632 aa).

Residues H77 and 118–120 (GHA) contribute to the thiamine diphosphate site. D149 serves as a coordination point for Mg(2+). Thiamine diphosphate contacts are provided by residues 150-151 (GS), N178, F287, and E372. N178 lines the Mg(2+) pocket.

Belongs to the transketolase family. DXPS subfamily. As to quaternary structure, homodimer. Mg(2+) serves as cofactor. It depends on thiamine diphosphate as a cofactor.

It catalyses the reaction D-glyceraldehyde 3-phosphate + pyruvate + H(+) = 1-deoxy-D-xylulose 5-phosphate + CO2. The protein operates within metabolic intermediate biosynthesis; 1-deoxy-D-xylulose 5-phosphate biosynthesis; 1-deoxy-D-xylulose 5-phosphate from D-glyceraldehyde 3-phosphate and pyruvate: step 1/1. Catalyzes the acyloin condensation reaction between C atoms 2 and 3 of pyruvate and glyceraldehyde 3-phosphate to yield 1-deoxy-D-xylulose-5-phosphate (DXP). In Chlorobium luteolum (strain DSM 273 / BCRC 81028 / 2530) (Pelodictyon luteolum), this protein is 1-deoxy-D-xylulose-5-phosphate synthase.